The following is a 160-amino-acid chain: Small ribosomal subunit protein uS7 (160 aa).

It belongs to the universal ribosomal protein uS7 family. In terms of assembly, part of the 30S ribosomal subunit. Contacts proteins S9 and S11.

Its function is as follows. One of the primary rRNA binding proteins, it binds directly to 16S rRNA where it nucleates assembly of the head domain of the 30S subunit. Is located at the subunit interface close to the decoding center, probably blocks exit of the E-site tRNA. The chain is Small ribosomal subunit protein uS7 from Ehrlichia ruminantium (strain Gardel).